We begin with the raw amino-acid sequence, 267 residues long: GTP cyclohydrolase FolE2 (267 aa).

This sequence belongs to the GTP cyclohydrolase IV family.

It carries out the reaction GTP + H2O = 7,8-dihydroneopterin 3'-triphosphate + formate + H(+). The protein operates within cofactor biosynthesis; 7,8-dihydroneopterin triphosphate biosynthesis; 7,8-dihydroneopterin triphosphate from GTP: step 1/1. Converts GTP to 7,8-dihydroneopterin triphosphate. The polypeptide is GTP cyclohydrolase FolE2 (Cupriavidus necator (strain ATCC 17699 / DSM 428 / KCTC 22496 / NCIMB 10442 / H16 / Stanier 337) (Ralstonia eutropha)).